The sequence spans 140 residues: Protein KRTCAP2 homolog (140 aa).

4 helical membrane passes run 11 to 31, 40 to 60, 74 to 94, and 98 to 118; these read LLSSIISGILSLVIFATLRFC, LNVLVGGYLFSWLFILSLTCV, AKLVPEILFCLSLTVAAAGIV, and CATTSVLFSLVGLYFLNRISI.

This sequence belongs to the KRTCAP2 family. Component of the oligosaccharyltransferase (OST) complex.

Its subcellular location is the membrane. In terms of biological role, subunit of the oligosaccharyl transferase (OST) complex that catalyzes the initial transfer of a defined glycan (Glc(3)Man(9)GlcNAc(2) in eukaryotes) from the lipid carrier dolichol-pyrophosphate to an asparagine residue within an Asn-X-Ser/Thr consensus motif in nascent polypeptide chains, the first step in protein N-glycosylation. N-glycosylation occurs cotranslationally and the complex associates with the Sec61 complex at the channel-forming translocon complex that mediates protein translocation across the endoplasmic reticulum (ER). All subunits are required for a maximal enzyme activity. This chain is Protein KRTCAP2 homolog, found in Drosophila pseudoobscura pseudoobscura (Fruit fly).